A 262-amino-acid chain; its full sequence is Electron transfer flavoprotein beta subunit lysine methyltransferase (262 aa).

The N-terminal 38 residues, 1–38 (MALSLGWKAHRNHCGLLLQALRSSGLLLFPCGQCPWRG), are a transit peptide targeting the mitochondrion.

Belongs to the methyltransferase superfamily. ETFBKMT family. As to quaternary structure, interacts with HSPD1; this protein may possibly be a methylation substrate.

The protein resides in the cytoplasm. The protein localises to the mitochondrion matrix. It carries out the reaction L-lysyl-[protein] + 3 S-adenosyl-L-methionine = N(6),N(6),N(6)-trimethyl-L-lysyl-[protein] + 3 S-adenosyl-L-homocysteine + 3 H(+). Its function is as follows. Protein-lysine methyltransferase that selectively trimethylates the flavoprotein ETFB in mitochondria. Thereby, may negatively regulate the function of ETFB in electron transfer from Acyl-CoA dehydrogenases to the main respiratory chain. The polypeptide is Electron transfer flavoprotein beta subunit lysine methyltransferase (Homo sapiens (Human)).